The chain runs to 415 residues: Probable G-protein coupled receptor 19 (415 aa).

At 1–69 (MGFDHRMETD…LNPGEVATAS (69 aa)) the chain is on the extracellular side. N-linked (GlcNAc...) asparagine glycosylation is found at Asn-25 and Asn-52. The chain crosses the membrane as a helical span at residues 70-90 (IFFGALWLFSIFGNSLVCLVI). Residues 91 to 102 (HRSRRTQSTTNY) lie on the Cytoplasmic side of the membrane. The chain crosses the membrane as a helical span at residues 103-123 (FVVSMACADLLISVASTPFVV). Residues 124 to 152 (LQFTTGRWTLGSAMCKVVRYFQYLTPGVQ) are Extracellular-facing. An intrachain disulfide couples Cys-138 to Cys-210. A helical transmembrane segment spans residues 153 to 173 (IYVLLSICIDRFYTIVYPLSF). At 174–182 (KVSREKAKR) the chain is on the cytoplasmic side. The helical transmembrane segment at 183 to 203 (MIAASWILDAAFVTPVFFFYG) threads the bilayer. Residues 204-221 (SNWDSHCNYFLPPSWEGT) lie on the Extracellular side of the membrane. Residues 222-242 (AYTVIHFLVGFVIPSVLIILF) traverse the membrane as a helical segment. Over 243 to 277 (YQKVIKYIWRIGTDGRTLRRTMNIVPRTKVKTVKM) the chain is Cytoplasmic. The chain crosses the membrane as a helical span at residues 278-298 (FLLLNLVFLFSWLPFHVAQLW). The Extracellular portion of the chain corresponds to 299 to 309 (HPHEQDYRKSS). Residues 310-332 (LVFTAVTWVSFSSSASKPTLYSI) traverse the membrane as a helical segment. The Cytoplasmic portion of the chain corresponds to 333-415 (YNANFRRGMK…INSNPPNTFV (83 aa)).

This sequence belongs to the G-protein coupled receptor 1 family. As to expression, abundant expression in the brain.

The protein resides in the cell membrane. G-protein coupled receptor that plays a role in the regulation of circadian rhythms and energy metabolism. Participates in maintaining proper circadian gene expression in the suprachiasmatic nucleus (SCN), the locus of the master circadian clock in the brain. May function as a coordinator of aging-associated metabolic dysfunction, stress response, DNA integrity management, and eventual senescence. Upon binding to adropin, modulates mitochondrial energy metabolism via the p44/42-PDK4 signaling pathway, influencing pyruvate dehydrogenase activity. This is Probable G-protein coupled receptor 19 (Gpr19) from Rattus norvegicus (Rat).